Reading from the N-terminus, the 160-residue chain is SsrA-binding protein (160 aa).

The span at 137 to 153 shows a compositional bias: basic and acidic residues; the sequence is DKRDDIKTREWKQDKAR. A disordered region spans residues 137–160; sequence DKRDDIKTREWKQDKARIMKNANR.

It belongs to the SmpB family.

The protein resides in the cytoplasm. Its function is as follows. Required for rescue of stalled ribosomes mediated by trans-translation. Binds to transfer-messenger RNA (tmRNA), required for stable association of tmRNA with ribosomes. tmRNA and SmpB together mimic tRNA shape, replacing the anticodon stem-loop with SmpB. tmRNA is encoded by the ssrA gene; the 2 termini fold to resemble tRNA(Ala) and it encodes a 'tag peptide', a short internal open reading frame. During trans-translation Ala-aminoacylated tmRNA acts like a tRNA, entering the A-site of stalled ribosomes, displacing the stalled mRNA. The ribosome then switches to translate the ORF on the tmRNA; the nascent peptide is terminated with the 'tag peptide' encoded by the tmRNA and targeted for degradation. The ribosome is freed to recommence translation, which seems to be the essential function of trans-translation. This is SsrA-binding protein from Edwardsiella ictaluri (strain 93-146).